A 445-amino-acid chain; its full sequence is Putative ankyrin repeat protein L797 (445 aa).

4 ANK repeats span residues 73 to 102 (FMEDCLRQSFYDGQLYIADYLVDKGADIYS), 285 to 314 (NHEHIANLATQNGHIEILKYLVEEKYELVG), 315 to 344 (NLYIIMFLACQYGHLEIIKYLVELGVDIRQ), and 346 to 375 (LDAFIYLLWQGSYFNILKYLLTVDSDIINI).

In Acanthamoeba polyphaga (Amoeba), this protein is Putative ankyrin repeat protein L797.